A 459-amino-acid polypeptide reads, in one-letter code: MSNFAIILAAGKGTRMKSDLPKVLHKVAGISMLEHVFRSVGAIQPEKTVTVVGHKAELVEEVLAGQTEFVTQSEQLGTGHAVMMTEPILEGLSGHTLVIAGDTPLITGESLKNLIDFHINHKNVATILTAETDNPFGYGRIVRNDNAEVLRIVEQKDATDFEKQIKEINTGTYVFDNERLFEALKNINTNNAQGEYYITDVIGIFRETGEKVGAYTLKDFDESLGVNDRVALATAESVMRRRINHKHMVNGVSFVNPEATYIDIDVEIALEVQIEANVTLKGQTKIGAETVLTNGTYVVDSTIGAGAVITNSMIEESSVADGVTVGPYAHIRPNSSLGAQVHIGNFVEVKGSSIGENTKAGHLTYIGNCEVGSNVNFGAGTITVNYDGKNKYKTVIGDNVFVGSNSTIIAPVELGDNSLVGAGSTITKDVPADAIAIGRGRQINKDEYATRLPHHPKNQ.

The tract at residues 1–229 (MSNFAIILAA…FDESLGVNDR (229 aa)) is pyrophosphorylase. Residues 8–11 (LAAG), lysine 22, glutamine 72, and 77–78 (GT) contribute to the UDP-N-acetyl-alpha-D-glucosamine site. Aspartate 102 contacts Mg(2+). UDP-N-acetyl-alpha-D-glucosamine-binding residues include glycine 139, glutamate 154, asparagine 169, and asparagine 227. Asparagine 227 is a Mg(2+) binding site. Residues 230–250 (VALATAESVMRRRINHKHMVN) form a linker region. The interval 251 to 459 (GVSFVNPEAT…TRLPHHPKNQ (209 aa)) is N-acetyltransferase. 2 residues coordinate UDP-N-acetyl-alpha-D-glucosamine: arginine 332 and lysine 350. Catalysis depends on histidine 362, which acts as the Proton acceptor. UDP-N-acetyl-alpha-D-glucosamine contacts are provided by tyrosine 365 and asparagine 376. Acetyl-CoA contacts are provided by residues alanine 379, 385-386 (NY), serine 404, alanine 422, and arginine 439.

In the N-terminal section; belongs to the N-acetylglucosamine-1-phosphate uridyltransferase family. The protein in the C-terminal section; belongs to the transferase hexapeptide repeat family. Homotrimer. The cofactor is Mg(2+).

The protein localises to the cytoplasm. It catalyses the reaction alpha-D-glucosamine 1-phosphate + acetyl-CoA = N-acetyl-alpha-D-glucosamine 1-phosphate + CoA + H(+). The enzyme catalyses N-acetyl-alpha-D-glucosamine 1-phosphate + UTP + H(+) = UDP-N-acetyl-alpha-D-glucosamine + diphosphate. The protein operates within nucleotide-sugar biosynthesis; UDP-N-acetyl-alpha-D-glucosamine biosynthesis; N-acetyl-alpha-D-glucosamine 1-phosphate from alpha-D-glucosamine 6-phosphate (route II): step 2/2. It participates in nucleotide-sugar biosynthesis; UDP-N-acetyl-alpha-D-glucosamine biosynthesis; UDP-N-acetyl-alpha-D-glucosamine from N-acetyl-alpha-D-glucosamine 1-phosphate: step 1/1. Its pathway is bacterial outer membrane biogenesis; LPS lipid A biosynthesis. Catalyzes the last two sequential reactions in the de novo biosynthetic pathway for UDP-N-acetylglucosamine (UDP-GlcNAc). The C-terminal domain catalyzes the transfer of acetyl group from acetyl coenzyme A to glucosamine-1-phosphate (GlcN-1-P) to produce N-acetylglucosamine-1-phosphate (GlcNAc-1-P), which is converted into UDP-GlcNAc by the transfer of uridine 5-monophosphate (from uridine 5-triphosphate), a reaction catalyzed by the N-terminal domain. The polypeptide is Bifunctional protein GlmU (Streptococcus pneumoniae (strain JJA)).